Consider the following 196-residue polypeptide: ATP-dependent Clp protease proteolytic subunit (196 aa).

The active-site Nucleophile is the Ser99. His124 is an active-site residue.

It belongs to the peptidase S14 family. As to quaternary structure, fourteen ClpP subunits assemble into 2 heptameric rings which stack back to back to give a disk-like structure with a central cavity, resembling the structure of eukaryotic proteasomes.

Its subcellular location is the cytoplasm. The catalysed reaction is Hydrolysis of proteins to small peptides in the presence of ATP and magnesium. alpha-casein is the usual test substrate. In the absence of ATP, only oligopeptides shorter than five residues are hydrolyzed (such as succinyl-Leu-Tyr-|-NHMec, and Leu-Tyr-Leu-|-Tyr-Trp, in which cleavage of the -Tyr-|-Leu- and -Tyr-|-Trp bonds also occurs).. Cleaves peptides in various proteins in a process that requires ATP hydrolysis. Has a chymotrypsin-like activity. Plays a major role in the degradation of misfolded proteins. The chain is ATP-dependent Clp protease proteolytic subunit from Helicobacter hepaticus (strain ATCC 51449 / 3B1).